The primary structure comprises 88 residues: Small ribosomal subunit protein bS20 (88 aa).

The interval 1–22 (MANTPSAKKAVNKIAKRTQVNK) is disordered.

It belongs to the bacterial ribosomal protein bS20 family.

Binds directly to 16S ribosomal RNA. The chain is Small ribosomal subunit protein bS20 from Bartonella bacilliformis (strain ATCC 35685 / KC583 / Herrer 020/F12,63).